We begin with the raw amino-acid sequence, 394 residues long: L-lactate dehydrogenase (394 aa).

In terms of domain architecture, FMN hydroxy acid dehydrogenase spans M1–E380. Position 24 (Y24) interacts with substrate. 2 residues coordinate FMN: S106 and Q127. Residue Y129 participates in substrate binding. T155 serves as a coordination point for FMN. R164 contacts substrate. Residue K251 participates in FMN binding. The Proton acceptor role is filled by H275. Position 278 (R278) interacts with substrate. FMN is bound at residue D306 to R330.

It belongs to the FMN-dependent alpha-hydroxy acid dehydrogenase family. It depends on FMN as a cofactor.

It is found in the cell inner membrane. It carries out the reaction (S)-lactate + A = pyruvate + AH2. Functionally, catalyzes the conversion of L-lactate to pyruvate. Is coupled to the respiratory chain. This Klebsiella pneumoniae (strain 342) protein is L-lactate dehydrogenase.